Here is a 783-residue protein sequence, read N- to C-terminus: Probable phosphoketolase (783 aa).

This sequence belongs to the XFP family. Requires thiamine diphosphate as cofactor.

The protein is Probable phosphoketolase of Rhodopseudomonas palustris (strain ATCC BAA-98 / CGA009).